The primary structure comprises 420 residues: Putative zinc metalloprotease Lmo1318 (420 aa).

H18 provides a ligand contact to Zn(2+). E19 is a catalytic residue. H22 serves as a coordination point for Zn(2+). 4 helical membrane-spanning segments follow: residues 172-194 (TIFAGPLFNFILAILIFTALAFV), 304-326 (NWIVQIFTILGNMFTGGFSLDML), 347-369 (VLNWTAVLSINLGIVNLLPLPAL), and 393-412 (GIIHFAGFALLMVLMILVTW). Positions 176 to 267 (GPLFNFILAI…DGKTQDIDVK (92 aa)) constitute a PDZ domain.

The protein belongs to the peptidase M50B family. The cofactor is Zn(2+).

It localises to the cell membrane. The chain is Putative zinc metalloprotease Lmo1318 from Listeria monocytogenes serovar 1/2a (strain ATCC BAA-679 / EGD-e).